Reading from the N-terminus, the 454-residue chain is Asparagine--tRNA ligase (454 aa).

This sequence belongs to the class-II aminoacyl-tRNA synthetase family. As to quaternary structure, homodimer.

Its subcellular location is the cytoplasm. It catalyses the reaction tRNA(Asn) + L-asparagine + ATP = L-asparaginyl-tRNA(Asn) + AMP + diphosphate + H(+). The protein is Asparagine--tRNA ligase of Ureaplasma parvum serovar 3 (strain ATCC 27815 / 27 / NCTC 11736).